The primary structure comprises 144 residues: 6-pyruvoyl tetrahydrobiopterin synthase (144 aa).

Residues 1–4 constitute a propeptide that is removed on maturation; it reads MNAA. The residue at position 18 (S18) is a Phosphoserine. H23 contributes to the Zn(2+) binding site. A Phosphoserine modification is found at S27. The active-site Proton acceptor is the C42. Zn(2+) contacts are provided by H48 and H50. H89 functions as the Charge relay system in the catalytic mechanism. The residue at position 127 (Y127) is a Phosphotyrosine. The active-site Charge relay system is the E133.

The protein belongs to the PTPS family. As to quaternary structure, homohexamer formed of two homotrimers in a head to head fashion. The cofactor is Zn(2+). Post-translationally, phosphorylation of Ser-18 is required for maximal enzyme activity.

The enzyme catalyses 7,8-dihydroneopterin 3'-triphosphate = 6-pyruvoyl-5,6,7,8-tetrahydropterin + triphosphate + H(+). It functions in the pathway cofactor biosynthesis; tetrahydrobiopterin biosynthesis; tetrahydrobiopterin from 7,8-dihydroneopterin triphosphate: step 1/3. Functionally, involved in the biosynthesis of tetrahydrobiopterin, an essential cofactor of aromatic amino acid hydroxylases. Catalyzes the transformation of 7,8-dihydroneopterin triphosphate into 6-pyruvoyl tetrahydropterin. The protein is 6-pyruvoyl tetrahydrobiopterin synthase (Pts) of Rattus norvegicus (Rat).